The sequence spans 565 residues: Sulfite reductase [NADPH] hemoprotein beta-component (565 aa).

[4Fe-4S] cluster-binding residues include Cys429, Cys435, Cys474, and Cys478. Residue Cys478 participates in siroheme binding.

This sequence belongs to the nitrite and sulfite reductase 4Fe-4S domain family. As to quaternary structure, alpha(8)-beta(8). The alpha component is a flavoprotein, the beta component is a hemoprotein. The cofactor is siroheme. [4Fe-4S] cluster is required as a cofactor.

It carries out the reaction hydrogen sulfide + 3 NADP(+) + 3 H2O = sulfite + 3 NADPH + 4 H(+). It participates in sulfur metabolism; hydrogen sulfide biosynthesis; hydrogen sulfide from sulfite (NADPH route): step 1/1. In terms of biological role, component of the sulfite reductase complex that catalyzes the 6-electron reduction of sulfite to sulfide. This is one of several activities required for the biosynthesis of L-cysteine from sulfate. The chain is Sulfite reductase [NADPH] hemoprotein beta-component from Shewanella halifaxensis (strain HAW-EB4).